The following is a 513-amino-acid chain: Proline-rich receptor-like protein kinase PERK3 (513 aa).

Topologically, residues 1 to 123 are extracellular; the sequence is MARSNRCVPQ…SPPSPSRLST (123 aa). Residue asparagine 11 is glycosylated (N-linked (GlcNAc...) asparagine). The span at 27-36 shows a compositional bias: polar residues; that stretch reads LKSRWQQITM. Positions 27–119 are disordered; sequence LKSRWQQITM…GFSLSPPSPS (93 aa). Residue asparagine 66 is glycosylated (N-linked (GlcNAc...) asparagine). Low complexity predominate over residues 78 to 89; that stretch reads PSTSTPPRLGNR. The span at 99–111 shows a compositional bias: polar residues; the sequence is GQEPTTPTMTPGF. Residues 124–144 form a helical membrane-spanning segment; it reads GAVVGISIGGGVFVLTLIFFL. Residues 145–513 are Cytoplasmic-facing; that stretch reads CKKKRPRDDK…TAQRYGGDSL (369 aa). Threonine 172 is modified (phosphothreonine). Positions 183–334 constitute a Protein kinase domain; it reads FSEANLLGEG…DFGLAKIALD (152 aa). Residues 189–197 and lysine 211 contribute to the ATP site; that span reads LGEGGFGFV. The residue at position 256 (tyrosine 256) is a Phosphotyrosine. Aspartate 307 acts as the Proton acceptor in catalysis. The residue at position 340 (serine 340) is a Phosphoserine. Phosphothreonine is present on residues threonine 341 and threonine 346. A Phosphotyrosine modification is found at tyrosine 354.

This sequence belongs to the protein kinase superfamily. Ser/Thr protein kinase family. As to expression, expressed at low levels in inflorescence bolt, flower buds, siliques, roots, seedlings and leaves.

Its subcellular location is the cell membrane. The enzyme catalyses L-seryl-[protein] + ATP = O-phospho-L-seryl-[protein] + ADP + H(+). The catalysed reaction is L-threonyl-[protein] + ATP = O-phospho-L-threonyl-[protein] + ADP + H(+). The chain is Proline-rich receptor-like protein kinase PERK3 (PERK3) from Arabidopsis thaliana (Mouse-ear cress).